The following is a 1825-amino-acid chain: Serine protease/ABC transporter B family protein tagD (1825 aa).

A signal peptide spans 1–26; sequence MKSNTNIRVLLVSGLILIFIFLGIKF. The Peptidase S8 domain maps to 307 to 727; sequence PKAIFGTKDT…NAVFDTFAGA (421 aa). Residues Asp-338 and His-384 each act as charge relay system in the active site. N-linked (GlcNAc...) asparagine glycosylation is present at Asn-629. Catalysis depends on Ser-652, which acts as the Charge relay system. N-linked (GlcNAc...) asparagine glycans are attached at residues Asn-704, Asn-781, Asn-849, and Asn-896. The chain crosses the membrane as a helical span at residues 971–991; the sequence is YIVIIVAGGTMSLIITVLILI. A glycan (N-linked (GlcNAc...) asparagine) is linked at Asn-1018. A run of 4 helical transmembrane segments spans residues 1071-1091, 1116-1136, 1189-1209, and 1210-1230; these read FIIE…ASIL, FIII…SSWI, GILL…VFIF, and TISW…AIVT. The ABC transmembrane type-1 domain maps to 1075 to 1358; the sequence is ITISTACSLV…LFGVYSSYVQ (284 aa). Asn-1295 carries N-linked (GlcNAc...) asparagine glycosylation. The next 2 membrane-spanning stretches (helical) occupy residues 1304–1324 and 1327–1347; these read WLMV…LAIQ and FTVG…DSST. The interval 1386–1529 is disordered; the sequence is DNIIDTNQDN…NDDPNDNNGI (144 aa). Low complexity predominate over residues 1388-1402; it reads IIDTNQDNNNNNNND. The span at 1403-1415 shows a compositional bias: acidic residues; that stretch reads DISDSSSDDDDDN. Asn-1424 carries an N-linked (GlcNAc...) asparagine glycan. A compositionally biased stretch (low complexity) spans 1465-1494; sequence GEGIDNNNNNNNDNNINDDNNQQDPNNNNN. Residues 1495–1514 show a composition bias toward acidic residues; sequence EIDDDGDDDGDDDDEGEDEN. Residues 1515–1529 show a composition bias toward low complexity; sequence NNNNNNDDPNDNNGI. The region spanning 1576–1813 is the ABC transporter domain; it reads IEFKNVSFCY…KGKYYRMFAF (238 aa). Asn-1580 carries an N-linked (GlcNAc...) asparagine glycan. 1611 to 1618 serves as a coordination point for ATP; it reads GPSGSGKS. Asn-1715 and Asn-1755 each carry an N-linked (GlcNAc...) asparagine glycan.

It in the C-terminal section; belongs to the ABC transporter superfamily. ABCB family. Multidrug resistance exporter (TC 3.A.1.201) subfamily. In the N-terminal section; belongs to the peptidase S8 family.

It is found in the membrane. This is Serine protease/ABC transporter B family protein tagD (tagD) from Dictyostelium discoideum (Social amoeba).